The chain runs to 612 residues: Indole-3-acetic acid-amido synthetase GH3.6 (612 aa).

Belongs to the IAA-amido conjugating enzyme family. As to expression, expressed in cotyledons, stipules, true leaves, hypocotyls, and all parts of the roots. Not detected in flowers.

Its function is as follows. Catalyzes the synthesis of indole-3-acetic acid (IAA)-amino acid conjugates, providing a mechanism for the plant to cope with the presence of excess auxin. Strongly reactive with Glu, Gln, Trp, Asp, Ala, Leu, Phe, Gly, Tyr, Met, Ile and Val. Little or no product formation with His, Ser, Thr, Arg, Lys, or Cys. Also active on pyruvic and butyric acid analogs of IAA, PAA and the synthetic auxin naphthaleneacetic acid (NAA). The two chlorinated synthetic auxin herbicides 2,4-D and 3,6-dichloro-o-anisic acid (dicamba) cannot be used as substrates. Involved in auxin signal transduction. Inhibits shoot and hypocotyl cell elongation, and lateral root cell differentiation in light. The protein is Indole-3-acetic acid-amido synthetase GH3.6 (GH3.6) of Arabidopsis thaliana (Mouse-ear cress).